A 585-amino-acid polypeptide reads, in one-letter code: Potassium-transporting ATPase potassium-binding subunit (585 aa).

12 helical membrane-spanning segments follow: residues 25–45, 84–104, 152–172, 194–214, 275–295, 307–327, 345–365, 368–388, 397–417, 437–457, 502–522, and 547–567; these read IIIF…SFYI, YFIN…LVIM, FVIT…SMAF, IFDL…LAGV, LEFV…GIVF, VIMF…YVGV, AIGV…STGA, GALV…LLLN, GVLN…LMVG, LSLV…LMIP, LDGV…LVIA, and LLLI…IIVL.

Belongs to the KdpA family. The system is composed of three essential subunits: KdpA, KdpB and KdpC.

It localises to the cell membrane. Its function is as follows. Part of the high-affinity ATP-driven potassium transport (or Kdp) system, which catalyzes the hydrolysis of ATP coupled with the electrogenic transport of potassium into the cytoplasm. This subunit binds the extracellular potassium ions and delivers the ions to the membrane domain of KdpB through an intramembrane tunnel. This is Potassium-transporting ATPase potassium-binding subunit from Thermoplasma volcanium (strain ATCC 51530 / DSM 4299 / JCM 9571 / NBRC 15438 / GSS1).